The chain runs to 315 residues: Calumenin (315 aa).

The N-terminal stretch at 1 to 19 (MNKRPLLLCLGLWVACTLS) is a signal peptide. 6 consecutive EF-hand domains span residues 68-103 (ESKERLGMIVGKIDLDNDGYVTEGELTAWIKKAQKK), 104-139 (YVYDNVERQWQEFDLSQDGLVSWDEYRNVTYGTYLD), 151-186 (QMMIRDERRFKMADKDGDLVATKEEFTAFLHPEEFD), 188-223 (MKDIVVLETMEDIDKNGDGLIDLEEYIGDMYNHDGD), 229-264 (WVKTEREQFMEFRDKNHDGKMDKEETKDWILPSDYD), and 265-300 (HSEAESRHLVYESDHNQDGKLTREEIVDKYDLFVGS). The Ca(2+) site is built by aspartate 81, aspartate 83, aspartate 85, tyrosine 87, glutamate 92, aspartate 117, serine 119, aspartate 121, and glutamate 128. N-linked (GlcNAc...) asparagine glycosylation is present at asparagine 131. Ca(2+) contacts are provided by aspartate 164, aspartate 166, aspartate 168, glutamate 175, aspartate 201, asparagine 203, aspartate 205, glutamate 212, aspartate 242, asparagine 244, aspartate 246, lysine 248, glutamate 253, aspartate 278, asparagine 280, aspartate 282, lysine 284, and glutamate 289. The Prevents secretion from ER motif lies at 312–315 (HDEF).

It belongs to the CREC family. In terms of assembly, interacts with ggcx.

The protein resides in the endoplasmic reticulum membrane. Its subcellular location is the golgi apparatus. The protein localises to the secreted. It localises to the melanosome. It is found in the sarcoplasmic reticulum lumen. Functionally, involved in regulation of vitamin K-dependent carboxylation of multiple N-terminal glutamate residues. Seems to inhibit gamma-carboxylase ggcx. Binds 7 calcium ions with a low affinity. The protein is Calumenin (calu) of Xenopus laevis (African clawed frog).